A 264-amino-acid polypeptide reads, in one-letter code: Methylthioribulose-1-phosphate dehydratase (264 aa).

Cysteine 110 contacts substrate. Zn(2+)-binding residues include histidine 128 and histidine 130. Glutamate 151 (proton donor/acceptor) is an active-site residue. Histidine 213 is a Zn(2+) binding site.

It belongs to the aldolase class II family. MtnB subfamily. Requires Zn(2+) as cofactor.

The protein localises to the cytoplasm. The enzyme catalyses 5-(methylsulfanyl)-D-ribulose 1-phosphate = 5-methylsulfanyl-2,3-dioxopentyl phosphate + H2O. It participates in amino-acid biosynthesis; L-methionine biosynthesis via salvage pathway; L-methionine from S-methyl-5-thio-alpha-D-ribose 1-phosphate: step 2/6. Its function is as follows. Catalyzes the dehydration of methylthioribulose-1-phosphate (MTRu-1-P) into 2,3-diketo-5-methylthiopentyl-1-phosphate (DK-MTP-1-P). The chain is Methylthioribulose-1-phosphate dehydratase from Vanderwaltozyma polyspora (strain ATCC 22028 / DSM 70294 / BCRC 21397 / CBS 2163 / NBRC 10782 / NRRL Y-8283 / UCD 57-17) (Kluyveromyces polysporus).